The following is a 1377-amino-acid chain: DNA-directed RNA polymerase subunit beta'' (1377 aa).

The Zn(2+) site is built by cysteine 224, cysteine 294, cysteine 301, and cysteine 304.

It belongs to the RNA polymerase beta' chain family. RpoC2 subfamily. In terms of assembly, in plastids the minimal PEP RNA polymerase catalytic core is composed of four subunits: alpha, beta, beta', and beta''. When a (nuclear-encoded) sigma factor is associated with the core the holoenzyme is formed, which can initiate transcription. Requires Zn(2+) as cofactor.

The protein resides in the plastid. It localises to the chloroplast. It catalyses the reaction RNA(n) + a ribonucleoside 5'-triphosphate = RNA(n+1) + diphosphate. Its function is as follows. DNA-dependent RNA polymerase catalyzes the transcription of DNA into RNA using the four ribonucleoside triphosphates as substrates. The protein is DNA-directed RNA polymerase subunit beta'' of Calycanthus floridus var. glaucus (Eastern sweetshrub).